The chain runs to 258 residues: Ribosomal RNA small subunit methyltransferase J (258 aa).

Residues 111 to 112 (RD), 127 to 128 (ER), and Asp-179 each bind S-adenosyl-L-methionine.

The protein belongs to the methyltransferase superfamily. RsmJ family.

Its subcellular location is the cytoplasm. The enzyme catalyses guanosine(1516) in 16S rRNA + S-adenosyl-L-methionine = N(2)-methylguanosine(1516) in 16S rRNA + S-adenosyl-L-homocysteine + H(+). Specifically methylates the guanosine in position 1516 of 16S rRNA. This is Ribosomal RNA small subunit methyltransferase J from Alteromonas mediterranea (strain DSM 17117 / CIP 110805 / LMG 28347 / Deep ecotype).